Here is a 261-residue protein sequence, read N- to C-terminus: MRVIIADSPEAVARMGAEQCIRLLQDKPAAVLGLATGSTPIALYAHLIQRRQQGEVSFHQVRTFNLDEYIGIAPQHPQSYRSFMQKQLFDHIDVLPENTHIPNGMGDPIAESRAYEDKIHSAGGIDLQILGLGRNGHIGFNEPTSSLSSRTRAKTLTQETIRDNSRFFSADEEQPHLAITMGIGTILDARKIMLLAAGAAKADAVKAMVEGPISAMHPASALQMHPSALVIVDTDAASKLELIDYYRWVQSETLRVQGAYL.

Asp-67 functions as the Proton acceptor; for enolization step in the catalytic mechanism. Residue Asn-135 is the For ring-opening step of the active site. Residue His-137 is the Proton acceptor; for ring-opening step of the active site. Residue Glu-142 is the For ring-opening step of the active site.

It belongs to the glucosamine/galactosamine-6-phosphate isomerase family. NagB subfamily. In terms of assembly, homohexamer.

The enzyme catalyses alpha-D-glucosamine 6-phosphate + H2O = beta-D-fructose 6-phosphate + NH4(+). The protein operates within amino-sugar metabolism; N-acetylneuraminate degradation; D-fructose 6-phosphate from N-acetylneuraminate: step 5/5. Catalyzes the reversible isomerization-deamination of glucosamine 6-phosphate (GlcN6P) to form fructose 6-phosphate (Fru6P) and ammonium ion. The protein is Glucosamine-6-phosphate deaminase of Hahella chejuensis (strain KCTC 2396).